The chain runs to 212 residues: ATP phosphoribosyltransferase (212 aa).

The protein belongs to the ATP phosphoribosyltransferase family. Short subfamily. As to quaternary structure, heteromultimer composed of HisG and HisZ subunits.

Its subcellular location is the cytoplasm. The enzyme catalyses 1-(5-phospho-beta-D-ribosyl)-ATP + diphosphate = 5-phospho-alpha-D-ribose 1-diphosphate + ATP. It functions in the pathway amino-acid biosynthesis; L-histidine biosynthesis; L-histidine from 5-phospho-alpha-D-ribose 1-diphosphate: step 1/9. In terms of biological role, catalyzes the condensation of ATP and 5-phosphoribose 1-diphosphate to form N'-(5'-phosphoribosyl)-ATP (PR-ATP). Has a crucial role in the pathway because the rate of histidine biosynthesis seems to be controlled primarily by regulation of HisG enzymatic activity. This is ATP phosphoribosyltransferase from Citrifermentans bemidjiense (strain ATCC BAA-1014 / DSM 16622 / JCM 12645 / Bem) (Geobacter bemidjiensis).